The chain runs to 106 residues: Large ribosomal subunit protein bL21 (106 aa).

The protein belongs to the bacterial ribosomal protein bL21 family. Part of the 50S ribosomal subunit. Contacts protein L20.

Its function is as follows. This protein binds to 23S rRNA in the presence of protein L20. This chain is Large ribosomal subunit protein bL21, found in Chlamydia abortus (strain DSM 27085 / S26/3) (Chlamydophila abortus).